Here is a 373-residue protein sequence, read N- to C-terminus: NADPH-dependent 3-keto-steroid reductase Hsd3b5 (373 aa).

Residues 10–15 (GAGGFL), Tyr155, and Lys159 contribute to the NADP(+) site. The active-site Proton donor is Lys159. The chain crosses the membrane as a helical span at residues 288–308 (LPLLYWLAFLLETVSFLLRPF). Lys350 is modified (N6-acetyllysine).

The protein belongs to the 3-beta-HSD family. As to expression, expressed predominantly in male liver.

Its subcellular location is the endoplasmic reticulum membrane. It localises to the mitochondrion membrane. The catalysed reaction is a 3beta-hydroxysteroid + NADP(+) = a 3-oxosteroid + NADPH + H(+). The enzyme catalyses 5alpha-androstane-3beta,17beta-diol + NADP(+) = 17beta-hydroxy-5alpha-androstan-3-one + NADPH + H(+). It carries out the reaction 3beta-hydroxy-5alpha-androstan-17-one + NADP(+) = 5alpha-androstan-3,17-dione + NADPH + H(+). Its pathway is steroid metabolism. Its function is as follows. Responsible for the reduction of the oxo group on the C-3 of 5alpha-androstane steroids. Catalyzes the conversion of dihydrotestosterone to its inactive form 5alpha-androstanediol, that does not bind androgen receptor/AR. Also converts androstanedione, a precursor of testosterone and estrone, to epiandrosterone. Does not function as an isomerase. This chain is NADPH-dependent 3-keto-steroid reductase Hsd3b5, found in Rattus norvegicus (Rat).